A 66-amino-acid chain; its full sequence is Moricin-1 (66 aa).

Positions 1-24 (MNILKFFFVFIVAMSLVSCSTAAP) are cleaved as a signal peptide.

As to expression, expressed in fat body and to a lesser extent in hemocyte and Malpighian tubules.

The protein resides in the secreted. In terms of biological role, has antibacterial activity against Gram-positive and Gram-negative bacteria. Probably acts by disturbing membrane functions with its amphipathic structure. This is Moricin-1 (MOR1) from Bombyx mori (Silk moth).